A 305-amino-acid chain; its full sequence is N-acetylmuramic acid 6-phosphate etherase (305 aa).

Residues Ile-61–Lys-224 form the SIS domain. Glu-89 functions as the Proton donor in the catalytic mechanism. Glu-120 is an active-site residue.

The protein belongs to the GCKR-like family. MurNAc-6-P etherase subfamily. Homodimer.

It catalyses the reaction N-acetyl-D-muramate 6-phosphate + H2O = N-acetyl-D-glucosamine 6-phosphate + (R)-lactate. The protein operates within amino-sugar metabolism; N-acetylmuramate degradation. In terms of biological role, specifically catalyzes the cleavage of the D-lactyl ether substituent of MurNAc 6-phosphate, producing GlcNAc 6-phosphate and D-lactate. The chain is N-acetylmuramic acid 6-phosphate etherase from Synechocystis sp. (strain ATCC 27184 / PCC 6803 / Kazusa).